We begin with the raw amino-acid sequence, 113 residues long: Large ribosomal subunit protein uL24 (113 aa).

This sequence belongs to the universal ribosomal protein uL24 family. As to quaternary structure, part of the 50S ribosomal subunit.

Functionally, one of two assembly initiator proteins, it binds directly to the 5'-end of the 23S rRNA, where it nucleates assembly of the 50S subunit. Its function is as follows. One of the proteins that surrounds the polypeptide exit tunnel on the outside of the subunit. This is Large ribosomal subunit protein uL24 from Micrococcus luteus (strain ATCC 4698 / DSM 20030 / JCM 1464 / CCM 169 / CCUG 5858 / IAM 1056 / NBRC 3333 / NCIMB 9278 / NCTC 2665 / VKM Ac-2230) (Micrococcus lysodeikticus).